The chain runs to 254 residues: PAXIP1-associated glutamate-rich protein 1 (254 aa).

Disordered regions lie at residues 1–111 (MSLA…PPSE) and 127–254 (LQAE…QRKY). A compositionally biased stretch (basic and acidic residues) spans 45 to 62 (KAEDEGEGGREETEREGS). A compositionally biased stretch (acidic residues) spans 78–98 (EPAEEDSEDWCVPCSDEEVEL). A sufficient for interaction with NCOA1 region spans residues 116–160 (YELLAAHGTLELQAEILPRRPPTPEAQSEEERSDEEPEAKEEEEE). Residue Thr-138 is modified to Phosphothreonine. Over residues 142–159 (QSEEERSDEEPEAKEEEE) the composition is skewed to acidic residues. Phosphoserine occurs at positions 143 and 148. Positions 161–254 (KPHMPTEFDF…SSLFPRQRKY (94 aa)) are sufficient for interaction with ESR1. Over residues 195-223 (QKREARLDKVLSDMKRHKKLEEQILRTGR) the composition is skewed to basic and acidic residues. The residue at position 237 (Ser-237) is a Phosphoserine.

As to quaternary structure, component of the KMT2 family MLL2/MLL3 complex (also named ASCOM complex), at least composed of the HMTs KMT2D and/or KMT2C, the common subunits ASH2L, RBBP5, WDR5 and DPY30, and the complex type-specific subunits PAXIP1/PTIP, PAGR1, NCOA6 and KDM6A; PAXIP1 is required for the association with the MLL2/MLL3 complex. Forms a constitutive complex with PAXIP1/PTIP independently of the MLL2/MLL3 complex. Interacts with NCOA1, ESR1, NR3C1, AR. Ubiquitously expressed.

It is found in the nucleus. Its association with the histone methyltransferase MLL2/MLL3 complex is suggesting a role in epigenetic transcriptional activation. However, in association with PAXIP1/PTIP is proposed to function at least in part independently of the MLL2/MLL3 complex. Proposed to be recruited by PAXIP1 to sites of DNA damage where the PAGR1:PAXIP1 complex is required for cell survival in response to DNA damage independently of the MLL2/MLL3 complex. However, its function in DNA damage has been questioned. During immunoglobulin class switching in activated B-cells is involved in transcription regulation of downstream switch regions at the immunoglobulin heavy-chain (Igh) locus independently of the MLL2/MLL3 complex. Involved in both estrogen receptor-regulated gene transcription and estrogen-stimulated G1/S cell-cycle transition. Acts as a transcriptional cofactor for nuclear hormone receptors. Inhibits the induction properties of several steroid receptors such as NR3C1, AR and PPARG; the mechanism of inhibition appears to be gene-dependent. In Homo sapiens (Human), this protein is PAXIP1-associated glutamate-rich protein 1 (PAGR1).